The primary structure comprises 118 residues: uncharacterized protein (118 aa).

The helical transmembrane segment at 21 to 38 threads the bilayer; the sequence is IVYFFFFFGLETFFSIIN.

The protein resides in the membrane. This is an uncharacterized protein from Dictyostelium discoideum (Social amoeba).